The chain runs to 477 residues: MPIRGGRIVDTRGRTLLAKIWDQHVIAHVSDDTDLLHVDRHLLHDLGGSRGLIDLKSRNLPVHNPELTFATPDHAISTASGRAGTITTGQELLAALRTETSASGIRLFDIDQPGQGIVHVIGPELGLSLPGCLIVCGDSHTCTHGGLGALAFGIGSSELTHVLATQTIIQRRPKTMRVTFDGRMPFGVTAKDLILALIGHVGAAGGTGYAVEYAGSAIRGMPIEGRLTICNLSVELGAKMGLIAPDQTTFDYVRGRPYAPQGEMWERAVTAWRTLRSDSDAMFDREVTIDVGTIIPQITWGTSPEHVLGVDGRVPDPRDIADPARRGAIEIALDYMGLKPGAPIAGTKVDWVFIGSCTNSRLSDLRAAAEVARGRKVAPGVRAWVVPGSETVKRDAVAEGLDKIFIDAGFEWREPGCSMCLAANGETVPPGQRSVSTSNRNFIGRQGPRARTHLASPAMAAAAAVSGAIADVRTMER.

[4Fe-4S] cluster contacts are provided by cysteine 357, cysteine 417, and cysteine 420.

This sequence belongs to the aconitase/IPM isomerase family. LeuC type 1 subfamily. Heterodimer of LeuC and LeuD. [4Fe-4S] cluster is required as a cofactor.

It catalyses the reaction (2R,3S)-3-isopropylmalate = (2S)-2-isopropylmalate. It functions in the pathway amino-acid biosynthesis; L-leucine biosynthesis; L-leucine from 3-methyl-2-oxobutanoate: step 2/4. Functionally, catalyzes the isomerization between 2-isopropylmalate and 3-isopropylmalate, via the formation of 2-isopropylmaleate. This chain is 3-isopropylmalate dehydratase large subunit 1, found in Bradyrhizobium diazoefficiens (strain JCM 10833 / BCRC 13528 / IAM 13628 / NBRC 14792 / USDA 110).